Consider the following 231-residue polypeptide: Potassium/proton antiporter CemA (231 aa).

Helical transmembrane passes span 7 to 27 (FISLLYLASIVFLPWWISLSF), 116 to 136 (IISFVILSVFSILSNEELIFL), 156 to 176 (ILLLTDLCIGFHSPHGWELMI), and 191 to 211 (IISGVVSTFPVILDTIFKYWI).

Belongs to the CemA family.

It localises to the plastid. It is found in the chloroplast inner membrane. It carries out the reaction K(+)(in) + H(+)(out) = K(+)(out) + H(+)(in). Its function is as follows. Contributes to K(+)/H(+) antiport activity by supporting proton efflux to control proton extrusion and homeostasis in chloroplasts in a light-dependent manner to modulate photosynthesis. Prevents excessive induction of non-photochemical quenching (NPQ) under continuous-light conditions. Indirectly promotes efficient inorganic carbon uptake into chloroplasts. The protein is Potassium/proton antiporter CemA of Morus indica (Mulberry).